The chain runs to 439 residues: General transcription factor IIE subunit 1 (439 aa).

N-acetylalanine is present on alanine 2. The region spanning 14 to 104 (LKRLAKYVIR…NYRTLVNVVK (91 aa)) is the HTH TFE/IIEalpha-type domain. Residue lysine 67 is modified to N6-acetyllysine. Zn(2+) contacts are provided by cysteine 129, cysteine 132, cysteine 154, and cysteine 157. A C4-type zinc finger spans residues 129 to 157 (CPVCSSTFTDLEANQLFDPMTGTFRCTFC). Serine 268 carries the phosphoserine modification. The segment covering 333 to 344 (SSAMAGSVGAAA) has biased composition (low complexity). Positions 333–392 (SSAMAGSVGAAAPVTTANGSDSESETSESDDDSPPRPAAVAVHKREEDEEEDDEFEEVAD) are disordered. Composition is skewed to acidic residues over residues 354–364 (SESETSESDDD) and 379–392 (EDEE…EVAD).

It belongs to the TFIIE alpha subunit family. Tetramer of two alpha and two beta chains. Interacts with TAF6/TAFII80. Interacts with ATF7IP. Interacts with SND1. Part of TBP-based Pol II pre-initiation complex (PIC), in which Pol II core assembles with general transcription factors and other specific initiation factors including GTF2E1, GTF2E2, GTF2F1, GTF2F2, TCEA1, ERCC2, ERCC3, GTF2H2, GTF2H3, GTF2H4, GTF2H5, GTF2A1, GTF2A2, GTF2B and TBP; this large multi-subunit PIC complex mediates DNA unwinding and targets Pol II core to the transcription start site where the first phosphodiester bond forms.

Its subcellular location is the nucleus. Functionally, recruits TFIIH to the initiation complex and stimulates the RNA polymerase II C-terminal domain kinase and DNA-dependent ATPase activities of TFIIH. Both TFIIH and TFIIE are required for promoter clearance by RNA polymerase. The sequence is that of General transcription factor IIE subunit 1 (GTF2E1) from Pongo abelii (Sumatran orangutan).